A 723-amino-acid polypeptide reads, in one-letter code: Probable cadmium-transporting ATPase (723 aa).

The HMA domain occupies 12–75; it reads EMKAYRVQGF…AGAFENLKVT (64 aa). Positions 23 and 26 each coordinate Cd(2+). 5 consecutive transmembrane segments (helical) span residues 103–123, 127–147, 168–188, 329–349, and 361–381; these read STLLYASLLIAFGYLSSYVNG, IVTTLLFLASMFIGGLSLFKV, IGGAIIGEWAEVAIVVILFAI, YYTPIIMIIAALVAIVPPLFF, and LAVLVVGCPCALVISTPISIV. The 4-aspartylphosphate intermediate role is filled by Asp412. Transmembrane regions (helical) follow at residues 671–690 and 694–716; these read IIKANITFAIAIKFIALLLV and WLTLWIAILSDMGATLLVALNGL.

The protein belongs to the cation transport ATPase (P-type) (TC 3.A.3) family. Type IB subfamily.

The protein resides in the cell membrane. It carries out the reaction Cd(2+)(in) + ATP + H2O = Cd(2+)(out) + ADP + phosphate + H(+). Functionally, couples the hydrolysis of ATP with the export of cadmium. The sequence is that of Probable cadmium-transporting ATPase (cadA) from Alkalihalophilus pseudofirmus (strain ATCC BAA-2126 / JCM 17055 / OF4) (Bacillus pseudofirmus).